Reading from the N-terminus, the 1674-residue chain is Kinesin-like protein KIF14 (1674 aa).

Positions 1-391 (MSVHTSHSRH…TEPDSLKVEN (391 aa)) are required for PRC1-binding. 2 disordered regions span residues 132–158 (ETLN…KGVN) and 171–374 (KDSN…PEEN). 2 stretches are compositionally biased toward polar residues: residues 142 to 151 (GSDSASQASR) and 202 to 214 (SRAP…QTEA). A Phosphoserine modification is found at Ser-257. Thr-262 bears the Phosphothreonine mark. Over residues 267–279 (VLEHRWTPRHDPP) the composition is skewed to basic and acidic residues. Positions 302–311 (TFRSASSESR) are enriched in polar residues. Residues 317 to 329 (VPEHRWTPRHDLP) are compositionally biased toward basic and acidic residues. Positions 391 to 772 (NSQVTVAVRV…AAQRSNRNID (382 aa)) are required for microtubule-binding with high affinity. One can recognise a Kinesin motor domain in the interval 393-736 (QVTVAVRVRP…LRYATQARLI (344 aa)). 482–489 (GQTGSGKS) serves as a coordination point for ATP. Residues 743–826 (NEDMNAKLIR…QETKELQKAG (84 aa)) are a coiled coil. Residues 860–911 (TTVGKHTPSSSHDIQLSGVLIADDHCTIRNFGGTVSIVPAGEAKTYVNGTHI) form the FHA domain. The required for CIT-binding stretch occupies residues 936-1674 (PVEVQKGKKL…DCTPNRIQWV (739 aa)). Residues 961 to 1110 (EFAKNELLTA…VQMLQENRGN (150 aa)) adopt a coiled-coil conformation. Residues Ser-973 and Ser-1326 each carry the phosphoserine modification. The disordered stretch occupies residues 1618-1674 (GLSKPWESCSSNSKEEQCKSDRADCGKSGPRRACEPHGDATPAVSSGDCTPNRIQWV). The span at 1630–1642 (SKEEQCKSDRADC) shows a compositional bias: basic and acidic residues. The segment covering 1660–1674 (AVSSGDCTPNRIQWV) has biased composition (polar residues).

The protein belongs to the TRAFAC class myosin-kinesin ATPase superfamily. Kinesin family. In terms of assembly, directly interacts with PRC1 within a complex also containing KIF4A, KIF20A and KIF23; targets to the central spindle. Directly interacts with CIT depending on the activation state of the kinase (stronger interaction with the kinase-dead form); targets to the midbody. Interacts with ARRB2; the interaction is detected in the nucleus upon OR1D2 stimulation. Interacts with AKT1; the interaction is detected in the plasma membrane upon INS stimulation and promotes AKT1 phosphorylation. Interacts with SVIL; at midbody during cytokinesis. Interacts with RADIL (via PDZ domain); recruits RADIL to the microtubule network restricting RADIL from interaction with activated RAP1A.

The protein localises to the nucleus. The protein resides in the cytoplasm. It is found in the cytoskeleton. It localises to the spindle. Its subcellular location is the midbody. Its function is as follows. Microtubule motor protein that binds to microtubules with high affinity through each tubulin heterodimer and has an ATPase activity. Plays a role in many processes like cell division, cytokinesis and also in cell proliferation and apoptosis. During cytokinesis, targets to central spindle and midbody through its interaction with PRC1 and CIT respectively. Regulates cell growth through regulation of cell cycle progression and cytokinesis. During cell cycle progression acts through SCF-dependent proteasomal ubiquitin-dependent protein catabolic process which controls CDKN1B degradation, resulting in positive regulation of cyclins, including CCNE1, CCND1 and CCNB1. During late neurogenesis, regulates the cerebellar and cerebral cortex development and olfactory bulb development through regulation of apoptosis, cell proliferation and cell division. Also is required for chromosome congression and alignment during mitotic cell cycle process. Regulates cell spreading, focal adhesion dynamics, and cell migration through its interaction with RADIL resulting in regulation of RAP1A-mediated inside-out integrin activation by tethering RADIL on microtubules. This chain is Kinesin-like protein KIF14, found in Mus musculus (Mouse).